The chain runs to 308 residues: Methionyl-tRNA formyltransferase (308 aa).

A (6S)-5,6,7,8-tetrahydrofolate-binding site is contributed by 109–112 (SLLP).

This sequence belongs to the Fmt family.

The enzyme catalyses L-methionyl-tRNA(fMet) + (6R)-10-formyltetrahydrofolate = N-formyl-L-methionyl-tRNA(fMet) + (6S)-5,6,7,8-tetrahydrofolate + H(+). In terms of biological role, attaches a formyl group to the free amino group of methionyl-tRNA(fMet). The formyl group appears to play a dual role in the initiator identity of N-formylmethionyl-tRNA by promoting its recognition by IF2 and preventing the misappropriation of this tRNA by the elongation apparatus. In Clostridium beijerinckii (strain ATCC 51743 / NCIMB 8052) (Clostridium acetobutylicum), this protein is Methionyl-tRNA formyltransferase.